Consider the following 194-residue polypeptide: Phosphoheptose isomerase (194 aa).

The 158-residue stretch at Ile37–Gly194 folds into the SIS domain. Position 52–54 (Asn52–Gly54) interacts with substrate. Residues His61 and Glu65 each coordinate Zn(2+). Substrate-binding positions include Glu65, Asn93–Asp94, Ser119–Ser121, Ser124, and Gln172. Zn(2+) contacts are provided by Gln172 and His180.

This sequence belongs to the SIS family. GmhA subfamily. Homotetramer. Zn(2+) serves as cofactor.

The protein resides in the cytoplasm. The catalysed reaction is 2 D-sedoheptulose 7-phosphate = D-glycero-alpha-D-manno-heptose 7-phosphate + D-glycero-beta-D-manno-heptose 7-phosphate. It participates in carbohydrate biosynthesis; D-glycero-D-manno-heptose 7-phosphate biosynthesis; D-glycero-alpha-D-manno-heptose 7-phosphate and D-glycero-beta-D-manno-heptose 7-phosphate from sedoheptulose 7-phosphate: step 1/1. Its function is as follows. Catalyzes the isomerization of sedoheptulose 7-phosphate in D-glycero-D-manno-heptose 7-phosphate. In Sodalis glossinidius (strain morsitans), this protein is Phosphoheptose isomerase.